The chain runs to 277 residues: Diaminopimelate epimerase (277 aa).

Residues N11 and N62 each coordinate substrate. C71 serves as the catalytic Proton donor. Substrate is bound by residues G72–N73, N160, N193, and E211–R212. The active-site Proton acceptor is C220. G221–T222 is a binding site for substrate.

The protein belongs to the diaminopimelate epimerase family. Homodimer.

It is found in the cytoplasm. It catalyses the reaction (2S,6S)-2,6-diaminopimelate = meso-2,6-diaminopimelate. Its pathway is amino-acid biosynthesis; L-lysine biosynthesis via DAP pathway; DL-2,6-diaminopimelate from LL-2,6-diaminopimelate: step 1/1. Catalyzes the stereoinversion of LL-2,6-diaminopimelate (L,L-DAP) to meso-diaminopimelate (meso-DAP), a precursor of L-lysine. The polypeptide is Diaminopimelate epimerase (Methanococcus maripaludis (strain C5 / ATCC BAA-1333)).